The following is a 1088-amino-acid chain: RNA-directed RNA polymerase (1088 aa).

Residues 501–687 (LSYGDVTRFL…AKRYIAGGKI (187 aa)) enclose the RdRp catalytic domain.

This sequence belongs to the reoviridae RNA-directed RNA polymerase family. In terms of assembly, interacts with VP3 (Potential). Interacts with VP2; this interaction activates VP1. Interacts with NSP5; this interaction is probably necessary for the formation of functional virus factories. Interacts with NSP2; this interaction is weak. The cofactor is Mg(2+).

The protein localises to the virion. It catalyses the reaction RNA(n) + a ribonucleoside 5'-triphosphate = RNA(n+1) + diphosphate. In terms of biological role, RNA-directed RNA polymerase that is involved in both transcription and genome replication. Together with VP3 capping enzyme, forms an enzyme complex positioned near the channels situated at each of the five-fold vertices of the core. Following infection, the outermost layer of the virus is lost, leaving a double-layered particle (DLP) made up of the core and VP6 shell. VP1 then catalyzes the transcription of fully conservative plus-strand genomic RNAs that are extruded through the DLP's channels into the cytoplasm where they function as mRNAs for translation of viral proteins. One copy of each of the viral (+)RNAs is also recruited during core assembly, together with newly synthesized polymerase complexes and VP2. The polymerase of these novo-formed particles catalyzes the synthesis of complementary minus-strands leading to dsRNA formation. To do so, the polymerase specifically recognizes and binds 4 bases 5'-UGUG-3' in the conserved 3'-sequence of plus-strand RNA templates. VP2 presumably activates the autoinhibited VP1-RNA complex to coordinate packaging and genome replication. Once dsRNA synthesis is complete, the polymerase switches to the transcriptional mode, thus providing secondary transcription. This Rotavirus A (strain RVA/Cow/United States/NCDV-Lincoln/1969/G6P6[1]) (RV-A) protein is RNA-directed RNA polymerase.